Here is a 541-residue protein sequence, read N- to C-terminus: Neutral amino acid transporter B(0) (541 aa).

The residue at position 1 (Met1) is an N-acetylmethionine. Residues 1 to 51 (MVADPPRDSKGLAAAEPTANGGLALASIEDQGAAAGGYCGSRDQVRRCLRA) lie on the Cytoplasmic side of the membrane. A helical membrane pass occupies residues 52–81 (NLLVLLTVVAVVAGVALGLGVSGAGGALAL). Over 82–94 (GPERLSAFVFPGE) the chain is Extracellular. Residues 95 to 116 (LLLRLLRMIILPLVVCSLIGGA) traverse the membrane as a helical segment. The Cytoplasmic segment spans residues 117–130 (ASLDPGALGRLGAW). Residues 131 to 153 (ALLFFLVTTLLASALGVGLALAL) form a helical membrane-spanning segment. Residues 154–224 (QPGAASAAIN…GTRVKVPVGQ (71 aa)) are Extracellular-facing. N-linked (GlcNAc...) asparagine glycosylation is found at Asn163 and Asn212. The helical transmembrane segment at 225 to 248 (EVEGMNILGLVVFAIVFGVALRKL) threads the bilayer. Residues 249–257 (GPEGELLIR) are Cytoplasmic-facing. A helical membrane pass occupies residues 258 to 285 (FFNSFNEATMVLVSWIMWYAPVGIMFLV). The Extracellular segment spans residues 286–306 (AGKIVEMEDVGLLFARLGKYI). Residues 307–328 (LCCLLGHAIHGLLVLPLIYFLF) form a helical membrane-spanning segment. At 329–333 (TRKNP) the chain is on the cytoplasmic side. The segment at residues 334–364 (YRFLWGIVTPLATAFGTSSSSATLPLMMKCV) is an intramembrane region (discontinuously helical). The Cytoplasmic segment spans residues 365–373 (EENNGVAKH). A helical membrane pass occupies residues 374 to 400 (ISRFILPIGATVNMDGAALFQCVAAVF). 3 residues coordinate Na(+): Gly382, Thr384, and Asn386. Residues 401–413 (IAQLSQQSLDFVK) lie on the Extracellular side of the membrane. The discontinuously helical intramembrane region spans 414 to 447 (IITILVTATASSVGAAGIPAGGVLTLAIILEAVN). Topologically, residues 448-460 (LPVDHISLILAVD) are extracellular. A helical membrane pass occupies residues 461-482 (WLVDRSCTVLNVEGDALGAGLL). Asn471 and Asp475 together coordinate Na(+). The Cytoplasmic segment spans residues 483-541 (QNYVDRTESRSTEPELIQVKSELPLDPLPVPTEEGNPLLKHYRGPAGDATVASEKESVM). At Ser493 the chain carries Phosphoserine. Thr494 is subject to Phosphothreonine. Residues Ser503, Ser535, and Ser539 each carry the phosphoserine modification. The segment at 511-541 (PVPTEEGNPLLKHYRGPAGDATVASEKESVM) is disordered.

It belongs to the dicarboxylate/amino acid:cation symporter (DAACS) (TC 2.A.23) family. SLC1A5 subfamily. Homotrimer. Interacts with ERVH48-1/suppressyn; may negatively regulate syncytialization. Placenta, lung, skeletal muscle, kidney, pancreas, and intestine. Expressed in CD34-positive hematopoietic progenitors (at protein level).

It is found in the cell membrane. The protein localises to the melanosome. It carries out the reaction L-glutamine(out) + L-serine(in) + Na(+)(out) = L-glutamine(in) + L-serine(out) + Na(+)(in). The enzyme catalyses L-glutamine(in) + L-serine(out) + Na(+)(out) = L-glutamine(out) + L-serine(in) + Na(+)(in). It catalyses the reaction L-threonine(in) + L-glutamine(out) + Na(+)(out) = L-threonine(out) + L-glutamine(in) + Na(+)(in). The catalysed reaction is L-threonine(out) + L-glutamine(in) + Na(+)(out) = L-threonine(in) + L-glutamine(out) + Na(+)(in). It carries out the reaction L-asparagine(in) + L-glutamine(out) + Na(+)(out) = L-asparagine(out) + L-glutamine(in) + Na(+)(in). The enzyme catalyses L-asparagine(out) + L-glutamine(in) + Na(+)(out) = L-asparagine(in) + L-glutamine(out) + Na(+)(in). It catalyses the reaction L-glutamine(in) + L-alanine(out) + Na(+)(out) = L-glutamine(out) + L-alanine(in) + Na(+)(in). The catalysed reaction is L-valine(out) + L-glutamine(in) + Na(+)(out) = L-valine(in) + L-glutamine(out) + Na(+)(in). It carries out the reaction L-glutamine(in) + L-methionine(out) + Na(+)(out) = L-glutamine(out) + L-methionine(in) + Na(+)(in). The enzyme catalyses L-glutamine(in) + L-glutamate(out) + Na(+)(out) + H(+)(out) = L-glutamine(out) + L-glutamate(in) + Na(+)(in) + H(+)(in). It catalyses the reaction D-serine(in) + L-glutamine(out) + Na(+)(out) = D-serine(out) + L-glutamine(in) + Na(+)(in). The catalysed reaction is D-serine(in) + L-alanine(out) + Na(+)(out) = D-serine(out) + L-alanine(in) + Na(+)(in). It carries out the reaction nitrate(in) = nitrate(out). The enzyme catalyses iodide(out) = iodide(in). It catalyses the reaction thiocyanate(in) = thiocyanate(out). Regulated by L-cysteine, which can either inhibit substrate influx or trigger substrate efflux without being transported itself. Functionally, sodium-coupled antiporter of neutral amino acids. In a tri-substrate transport cycle, exchanges neutral amino acids between the extracellular and intracellular compartments, coupled to the inward cotransport of at least one sodium ion. The preferred substrate is the essential amino acid L-glutamine, a precursor for biosynthesis of proteins, nucleotides and amine sugars as well as an alternative fuel for mitochondrial oxidative phosphorylation. Exchanges L-glutamine with other neutral amino acids such as L-serine, L-threonine and L-asparagine in a bidirectional way. Provides L-glutamine to proliferating stem and activated cells driving the metabolic switch toward cell differentiation. The transport cycle is usually pH-independent, with the exception of L-glutamate. Transports extracellular L-glutamate coupled to the cotransport of one proton and one sodium ion in exchange for intracellular L-glutamine counter-ion. May provide for L-glutamate uptake in glial cells regulating glutamine/glutamate cycle in the nervous system. Can transport D-amino acids. Mediates D-serine release from the retinal glia potentially affecting NMDA receptor function in retinal neurons. Displays sodium- and amino acid-dependent but uncoupled channel-like anion conductance with a preference SCN(-) &gt;&gt; NO3(-) &gt; I(-) &gt; Cl(-). Through binding of the fusogenic protein syncytin-1/ERVW-1 may mediate trophoblasts syncytialization, the spontaneous fusion of their plasma membranes, an essential process in placental development. In terms of biological role, (Microbial infection) Acts as a cell surface receptor for Feline endogenous virus RD114. Its function is as follows. (Microbial infection) Acts as a cell surface receptor for Baboon M7 endogenous virus. (Microbial infection) Acts as a cell surface receptor for type D simian retroviruses. The sequence is that of Neutral amino acid transporter B(0) from Homo sapiens (Human).